Consider the following 316-residue polypeptide: Replication initiation protein (316 aa).

Belongs to the initiator RepB protein family.

This chain is Replication initiation protein (repA), found in Escherichia coli.